The chain runs to 108 residues: Transmembrane protein 213 (108 aa).

The first 27 residues, Met1 to Ala27, serve as a signal peptide directing secretion. At Glu28–Tyr71 the chain is on the extracellular side. N-linked (GlcNAc...) asparagine glycosylation is present at Asn34. The helical transmembrane segment at Gly72–Val92 threads the bilayer. Residues Asp93–Ala108 lie on the Cytoplasmic side of the membrane.

The protein resides in the membrane. This Bos taurus (Bovine) protein is Transmembrane protein 213 (TMEM213).